The sequence spans 321 residues: Glucokinase (321 aa).

8–13 serves as a coordination point for ATP; it reads GDVGGT.

This sequence belongs to the bacterial glucokinase family.

It is found in the cytoplasm. The catalysed reaction is D-glucose + ATP = D-glucose 6-phosphate + ADP + H(+). This chain is Glucokinase, found in Shigella boydii serotype 18 (strain CDC 3083-94 / BS512).